The primary structure comprises 92 residues: Small ribosomal subunit protein uS19 (92 aa).

Belongs to the universal ribosomal protein uS19 family.

In terms of biological role, protein S19 forms a complex with S13 that binds strongly to the 16S ribosomal RNA. The protein is Small ribosomal subunit protein uS19 of Corynebacterium diphtheriae (strain ATCC 700971 / NCTC 13129 / Biotype gravis).